A 233-amino-acid chain; its full sequence is Tetrahydromethanopterin S-methyltransferase subunit D (233 aa).

The next 6 helical transmembrane spans lie at 4–24 (LLLI…VHFV), 39–59 (VGTG…ITAA), 67–87 (LMIM…TMLV), 133–153 (FVSG…IYWA), 166–186 (MGAA…NAVI), and 209–229 (GIVA…LLVY).

This sequence belongs to the MtrD family. In terms of assembly, the complex is composed of 8 subunits; MtrA, MtrB, MtrC, MtrD, MtrE, MtrF, MtrG and MtrH.

The protein resides in the cell membrane. It catalyses the reaction 5-methyl-5,6,7,8-tetrahydromethanopterin + coenzyme M + 2 Na(+)(in) = 5,6,7,8-tetrahydromethanopterin + methyl-coenzyme M + 2 Na(+)(out). It participates in one-carbon metabolism; methanogenesis from CO(2); methyl-coenzyme M from 5,10-methylene-5,6,7,8-tetrahydromethanopterin: step 2/2. In terms of biological role, part of a complex that catalyzes the formation of methyl-coenzyme M and tetrahydromethanopterin from coenzyme M and methyl-tetrahydromethanopterin. This is an energy-conserving, sodium-ion translocating step. The polypeptide is Tetrahydromethanopterin S-methyltransferase subunit D (Methanothermobacter marburgensis (strain ATCC BAA-927 / DSM 2133 / JCM 14651 / NBRC 100331 / OCM 82 / Marburg) (Methanobacterium thermoautotrophicum)).